The chain runs to 183 residues: MQINREAILADWEAHPMRKPRIAKVTINIGVGESGERLTKAETMLEQLVGQKPIRRRAKQTNRDFGIRRGEPIAVKVTLRGEKAYQMLDRLLEAVDRKLKASNFDEHGNFCFGIQEHINIPGVEYDPEIGIFGMDVCVTLERPGFRVAKRKRQRRKIPTKHKLTKEEGIVFAMEELKAKVEGL.

The protein belongs to the universal ribosomal protein uL5 family. Part of the 50S ribosomal subunit; contacts the 5S rRNA and probably tRNA. Forms a bridge to the 30S subunit in the 70S ribosome.

Its function is as follows. This is one of the proteins that bind and probably mediate the attachment of the 5S RNA into the large ribosomal subunit, where it forms part of the central protuberance. In the 70S ribosome it contacts protein S13 of the 30S subunit (bridge B1b), connecting the 2 subunits; this bridge is implicated in subunit movement. May contact the P site tRNA; the 5S rRNA and some of its associated proteins might help stabilize positioning of ribosome-bound tRNAs. The polypeptide is Large ribosomal subunit protein uL5 (Thermococcus kodakarensis (strain ATCC BAA-918 / JCM 12380 / KOD1) (Pyrococcus kodakaraensis (strain KOD1))).